Reading from the N-terminus, the 600-residue chain is 1-deoxy-D-xylulose-5-phosphate synthase (600 aa).

Thiamine diphosphate is bound by residues His57 and 98–100 (GHA). Asp125 is a binding site for Mg(2+). Thiamine diphosphate-binding positions include 126–127 (AS), Asn155, Tyr264, and Glu343. Position 155 (Asn155) interacts with Mg(2+).

Belongs to the transketolase family. DXPS subfamily. Homodimer. Mg(2+) serves as cofactor. Thiamine diphosphate is required as a cofactor.

It catalyses the reaction D-glyceraldehyde 3-phosphate + pyruvate + H(+) = 1-deoxy-D-xylulose 5-phosphate + CO2. Its pathway is metabolic intermediate biosynthesis; 1-deoxy-D-xylulose 5-phosphate biosynthesis; 1-deoxy-D-xylulose 5-phosphate from D-glyceraldehyde 3-phosphate and pyruvate: step 1/1. Functionally, catalyzes the acyloin condensation reaction between C atoms 2 and 3 of pyruvate and glyceraldehyde 3-phosphate to yield 1-deoxy-D-xylulose-5-phosphate (DXP). The chain is 1-deoxy-D-xylulose-5-phosphate synthase from Fusobacterium nucleatum subsp. nucleatum (strain ATCC 25586 / DSM 15643 / BCRC 10681 / CIP 101130 / JCM 8532 / KCTC 2640 / LMG 13131 / VPI 4355).